The chain runs to 488 residues: Putative serine carboxypeptidase-like 30 (488 aa).

Positions 1-28 (MDNHTKSFSSLLISLWFTALLILVEMVS) are cleaved as a signal peptide. Cystine bridges form between Cys99–Cys368, Cys262–Cys275, and Cys299–Cys336. Residue Asn150 is glycosylated (N-linked (GlcNAc...) asparagine). The active site involves Ser192. Asn263 carries N-linked (GlcNAc...) asparagine glycosylation. 2 N-linked (GlcNAc...) asparagine glycosylation sites follow: Asn364 and Asn375. Active-site residues include Asp405 and His457.

The protein belongs to the peptidase S10 family. In terms of tissue distribution, expression not detected.

It is found in the secreted. Probable carboxypeptidase. The chain is Putative serine carboxypeptidase-like 30 (SCPL30) from Arabidopsis thaliana (Mouse-ear cress).